A 381-amino-acid chain; its full sequence is Chaperone protein DnaJ (381 aa).

The region spanning 4-69 (DYYEILGVAR…EKRARYDQFG (66 aa)) is the J domain. A CR-type zinc finger spans residues 139–221 (GGEKELRVTR…CGGSGLVRKT (83 aa)). Zn(2+) contacts are provided by C152, C155, C169, C172, C195, C198, C209, and C212. 4 CXXCXGXG motif repeats span residues 152 to 159 (CGHCHGNG), 169 to 176 (CPTCQGRG), 195 to 202 (CSTCRGEG), and 209 to 216 (CRECGGSG).

It belongs to the DnaJ family. As to quaternary structure, homodimer. Zn(2+) serves as cofactor.

It is found in the cytoplasm. Its function is as follows. Participates actively in the response to hyperosmotic and heat shock by preventing the aggregation of stress-denatured proteins and by disaggregating proteins, also in an autonomous, DnaK-independent fashion. Unfolded proteins bind initially to DnaJ; upon interaction with the DnaJ-bound protein, DnaK hydrolyzes its bound ATP, resulting in the formation of a stable complex. GrpE releases ADP from DnaK; ATP binding to DnaK triggers the release of the substrate protein, thus completing the reaction cycle. Several rounds of ATP-dependent interactions between DnaJ, DnaK and GrpE are required for fully efficient folding. Also involved, together with DnaK and GrpE, in the DNA replication of plasmids through activation of initiation proteins. This is Chaperone protein DnaJ from Carboxydothermus hydrogenoformans (strain ATCC BAA-161 / DSM 6008 / Z-2901).